Reading from the N-terminus, the 49-residue chain is Large ribosomal subunit protein bL33B (49 aa).

This sequence belongs to the bacterial ribosomal protein bL33 family.

The sequence is that of Large ribosomal subunit protein bL33B from Bacillus licheniformis (strain ATCC 14580 / DSM 13 / JCM 2505 / CCUG 7422 / NBRC 12200 / NCIMB 9375 / NCTC 10341 / NRRL NRS-1264 / Gibson 46).